The sequence spans 2055 residues: Protein PHOTOPERIOD-INDEPENDENT EARLY FLOWERING 1 (2055 aa).

Residues 1-47 (MASKGGKSKPDIVMASKSGKSKPDNESRAKRQKTLEAPKEPRRPKTH) form a disordered region. The span at 21-47 (SKPDNESRAKRQKTLEAPKEPRRPKTH) shows a compositional bias: basic and acidic residues. A Nuclear localization signal 1 motif is present at residues 29–36 (AKRQKTLE). The 73-residue stretch at 35 to 107 (LEAPKEPRRP…EEQRLRKVAL (73 aa)) folds into the HSA domain. Coiled-coil stretches lie at residues 78 to 147 (LRAS…LEFL) and 229 to 250 (EEDE…LQNE). Disordered regions lie at residues 183-332 (KSDE…SNDS) and 340-359 (ETHS…KSRK). Residues 208–230 (ELDEDYDLKSEDETEDDEDTIEE) show a composition bias toward acidic residues. Composition is skewed to basic and acidic residues over residues 231-243 (DEKH…RQEE) and 267-276 (VSRETSPVKD). Positions 392 to 416 (EEELAKADNEDHVEEIALLQKESEM) form a coiled coil. The interval 432-461 (KDISEDESESSFAVSEDSIVDSDENRQQAD) is disordered. In terms of domain architecture, Helicase ATP-binding spans 548–713 (VTMYEKKLNG…WSLMHFLMPH (166 aa)). 561 to 568 (DEMGLGKT) provides a ligand contact to ATP. Residues 664-667 (DEAH) carry the DEAH box motif. In terms of domain architecture, Helicase C-terminal spans 1076–1229 (KLQELAMLLR…NLVIQNGEYN (154 aa)). Residues 1293-1313 (EEAVDNQEFTEEPVERPEDDE) form a disordered region. The stretch at 1419-1492 (FEEKEWELDH…EREAAEVAEM (74 aa)) forms a coiled coil. 2 short sequence motifs (nuclear localization signal) span residues 1506–1513 (KKKKKAKK) and 1570–1577 (KKRDLIVD). The tract at residues 1577–1597 (DTDEEKTSKKKAKKHKKSLPN) is disordered. Over residues 1584–1594 (SKKKAKKHKKS) the composition is skewed to basic residues. Residues 1673 to 1727 (SWLPQEDAILCAMVHEYGPNWNFVSGTLYGMTAGGAYRGRYRHPAYCCERYRELI) enclose the Myb-like domain. Disordered stretches follow at residues 1843 to 1864 (ALQD…LQET) and 1951 to 1977 (KSRT…STKS). A compositionally biased stretch (polar residues) spans 1844–1864 (LQDSGPSQPDNTISRSRLQET). The stretch at 2006-2029 (GDREEEEEQEVDEKANSAEIEMIS) forms a coiled coil.

The protein belongs to the SNF2/RAD54 helicase family. SWR1 subfamily. In terms of assembly, component of the SWR1 chromatin-remodeling complex composed of at least ARP6/ESD1/SUF3, PIE1, SWC6, SWC2 and H2AZs (HTA8, HTA9, HTA11). Interacts (via c-terminus) with SWC6 and ARP6 and (via N-terminus) with H2AZs. In terms of tissue distribution, expressed in ovules, but not in stamens.

It localises to the nucleus. The enzyme catalyses ATP + H2O = ADP + phosphate + H(+). In terms of biological role, component of the SWR1 complex which mediates the ATP-dependent exchange of histone H2A for the H2A variant H2A.F/Z leading to transcriptional regulation of selected genes (e.g. FLC) by chromatin remodeling. Probable DNA-dependent ATPase. Not involved in the repression of FLC in gametophytes, but required for the reactivation of FLC in early embryos and for the maintenance of full activation of FLC in late embryos. In Arabidopsis thaliana (Mouse-ear cress), this protein is Protein PHOTOPERIOD-INDEPENDENT EARLY FLOWERING 1 (PIE1).